The following is a 7839-amino-acid chain: Nonribosomal peptide synthetase GRA1 (7839 aa).

Polar residues predominate over residues 1–23 (MALLNGKSTLPNGHNSSIESPNG). Positions 1–26 (MALLNGKSTLPNGHNSSIESPNGYTE) are disordered. Residues 264 to 650 (LASPNSCAVH…LGRIDDQVKI (387 aa)) are adenylation 1. In terms of domain architecture, Carrier 1 spans 793–866 (SAEALVLRQL…LQAEMSEKKK (74 aa)). An O-(pantetheine 4'-phosphoryl)serine modification is found at serine 827. Positions 916 to 1332 (DIYPASPLQE…ILSPSDVAQI (417 aa)) are condensation 1. The adenylation 2 stretch occupies residues 1351–1742 (FFTQVKRSPD…QRKDAQLKIR (392 aa)). Positions 1880-1957 (ELETEAERTM…AMSRQATVSD (78 aa)) constitute a Carrier 2 domain. O-(pantetheine 4'-phosphoryl)serine is present on serine 1918. Residues 1997-2413 (DLYPCTPFQE…LISPSDMETI (417 aa)) form a condensation 2 region. The segment at 2432 to 2828 (FDRRLSQKHS…GRRDTQLKIR (397 aa)) is adenylation 3. A Carrier 3 domain is found at 2963–3040 (IPTTQMEWNL…DLAQAIVLDT (78 aa)). At serine 3001 the chain carries O-(pantetheine 4'-phosphoryl)serine. The segment at 3084-3496 (DIYPCTPLQD…QVDLISDSDH (413 aa)) is condensation 3. The adenylation 4 stretch occupies residues 3520-3923 (RLAVSNPDAE…GRRDSQVKLR (404 aa)). Residues 4057-4134 (RPLTEREKDL…DMAAMTTSLS (78 aa)) form the Carrier 4 domain. At serine 4095 the chain carries O-(pantetheine 4'-phosphoryl)serine. The segment at 4234-4569 (NLEEFVGRQS…MMNPDDAEEI (336 aa)) is condensation 4. An adenylation 5 region spans residues 4591-4982 (HSKGCPDRIA…VSRKDTQVKF (392 aa)). Residues 5113–5189 (ALSSDEESQL…DMALCMTSAQ (77 aa)) form the Carrier 5 domain. O-(pantetheine 4'-phosphoryl)serine is present on serine 5150. Residues 5224-5653 (EDIYPCSALQ…VSPSDQAEIL (430 aa)) form a condensation 5 region. Positions 5671–6069 (FESRARLQPS…GRRDTQVKLR (399 aa)) are adenylation 6. The region spanning 6207–6282 (FPSSLAEQQM…HMAAIATTFT (76 aa)) is the Carrier 6 domain. Serine 6243 is subject to O-(pantetheine 4'-phosphoryl)serine. The segment at 6321-6730 (QDIYPCSALQ…RLADMDLTGP (410 aa)) is condensation 6. The tract at residues 6756–7147 (EQRVKSQPDS…LGRKDSQIKL (392 aa)) is adenylation 7. A Carrier 7 domain is found at 7290–7366 (KAATPNEKTL…DLARVSRQSI (77 aa)). Residue serine 7327 is modified to O-(pantetheine 4'-phosphoryl)serine. The tract at residues 7404–7704 (HDIYPCTQVQ…LDYAKKRASS (301 aa)) is condensation7.

It belongs to the NRP synthetase family.

It functions in the pathway mycotoxin biosynthesis. Functionally, nonribosomal peptide synthetase; part of the gene cluster that mediates the biosynthesis of gramillins A and B, bicyclic lipopeptides that induce cell death in maize leaves but not in wheat leaves. The nonribosomal peptide synthetase GRA1 incorporates respectively a glutamic adic (Glu), a leucine (Leu), a serine (Ser), a hydroxyglutamine (HOGln), a 2-amino decanoic acid, and 2 cysteins (CysB and CysA). The biosynthesis of 2-amino decanoic acid incorporated in gramillins could be initiated by a fatty acid synthase composed of the alpha and beta subunits FGSG_00036 and FGSG_11656. The cytochrome P450 monooxygenase FGSG_15680 could hydroxylate the fatty acid chain. Subsequent oxidation to the ketone by the oxidoreductase FGSG_00048 and transamination by aminotransferase FGSG_00049 could form 2-amino-decanoic acid. On the other hand, FGSG_15680 could also be responsible for the HO-modified glutamine at the gamma-position. Whether hydroxylation occurs on the fully assembled product or on the Gln residue prior to assembly into the gramillins requires further proof. The thioredoxin FGSG_00043 could also be required for the disulfide-bond formation between CysA and CysB. The specific involvement of the remaining proteins from the cluster is more difficult to discern, but could have broader regulatory (FGSG_00040 and FGSG_11657) or enzymatic functions (FGSG_00044 and FGSG_00045). The final C-domain of GRA1 does not possess the expected sequence of a termination CT domain, often implicated in macrocyclization and release of a cyclopeptidein fungal NRPs; and the thioesterase FGSG_00047 may act in concert with the terminal C-domain of GRA1 to catalyze the formation of the macrocyclic anhydride and release of the products. This Gibberella zeae (strain ATCC MYA-4620 / CBS 123657 / FGSC 9075 / NRRL 31084 / PH-1) (Wheat head blight fungus) protein is Nonribosomal peptide synthetase GRA1.